The chain runs to 155 residues: Altered inheritance rate of mitochondria protein 29 (155 aa).

Residue S78 is modified to Phosphoserine.

Belongs to the UPF0538 family.

It is found in the cytoplasm. May be involved in mitochondrial organization and biogenesis. This chain is Altered inheritance rate of mitochondria protein 29 (AIM29), found in Saccharomyces cerevisiae (strain ATCC 204508 / S288c) (Baker's yeast).